A 772-amino-acid polypeptide reads, in one-letter code: Gelsolin (772 aa).

The N-terminal stretch at 1-17 is a signal peptide; sequence LGALVVALCALSPPARA. The propeptide occupies 18-33; sequence ATASRGAPQARAPQGR. The tract at residues 19-38 is disordered; that stretch reads TASRGAPQARAPQGRVSPMR. The interval 41 to 166 is actin-severing; sequence TMVVEHPEFL…YKKGGVASGF (126 aa). One copy of the Gelsolin-like 1 repeat lies at 66–148; it reads FDLVPVPPNL…VQGFESATFL (83 aa). Tyrosine 76 bears the Phosphotyrosine mark. Ca(2+) contacts are provided by glycine 82, aspartate 83, glutamate 114, aspartate 126, glycine 131, and alanine 133. Residues 113-116 form an actin-actin interfilament contact point region; the sequence is DESG. A 1,2-diacyl-sn-glycero-3-phospho-(1D-myo-inositol-4,5-bisphosphate) is bound at residue 152 to 159; the sequence is KSGLKYKK. Valine 162 contacts Ca(2+). 178–186 is a binding site for a 1,2-diacyl-sn-glycero-3-phospho-(1D-myo-inositol-4,5-bisphosphate); sequence RLFQVKGRR. One copy of the Gelsolin-like 2 repeat lies at 188–260; sequence VRATEVPVSW…SEEDAEPAGM (73 aa). Glycine 203 and aspartate 204 together coordinate Ca(2+). Cysteines 205 and 218 form a disulfide. Residues glutamate 226, aspartate 276, glutamate 319, aspartate 320, and glutamate 344 each contribute to the Ca(2+) site. One copy of the Gelsolin-like 3 repeat lies at 307–379; sequence DENPFAQGAL…LPEGGETPLF (73 aa). Residues tyrosine 399 and tyrosine 455 each carry the phosphotyrosine modification. The actin-binding, Ca-sensitive stretch occupies residues 424–772; the sequence is AAQHGMDDDG…LDRAIAELAA (349 aa). The stretch at 445 to 526 is one Gelsolin-like 4 repeat; that stretch reads SNKVPVDPAT…VQGKEPAHLM (82 aa). 7 residues coordinate Ca(2+): glycine 461, aspartate 462, glutamate 492, aspartate 504, glycine 509, proline 511, and threonine 541. The stretch at 567–632 is one Gelsolin-like 5 repeat; sequence RAVEVIPKAG…AEGSEPDSFW (66 aa). Lysine 574 is subject to N6-acetyllysine. Asparagine 581 and aspartate 582 together coordinate Ca(2+). Tyrosine 593 bears the Phosphotyrosine mark. A Ca(2+)-binding site is contributed by glutamate 604. A Phosphotyrosine modification is found at tyrosine 641. The stretch at 671 to 746 is one Gelsolin-like 6 repeat; it reads VEEVPGELMQ…VKQGFEPPSF (76 aa). Positions 686, 687, and 709 each coordinate Ca(2+). The residue at position 732 (threonine 732) is a Phosphothreonine.

Belongs to the villin/gelsolin family. Binds to actin and to fibronectin. Identified in a complex composed of ACTA1, COBL, GSN and TMSB4X. Interacts with the inactive form of EIF2AK2/PKR. Interacts with FLII. In terms of processing, phosphorylated on tyrosine residues in vitro.

It is found in the cytoplasm. The protein localises to the cytoskeleton. Its subcellular location is the secreted. In terms of biological role, calcium-regulated, actin-modulating protein that binds to the plus (or barbed) ends of actin monomers or filaments, preventing monomer exchange (end-blocking or capping). It can promote the assembly of monomers into filaments (nucleation) as well as sever filaments already formed. Plays a role in ciliogenesis. In Sus scrofa (Pig), this protein is Gelsolin (GSN).